Reading from the N-terminus, the 123-residue chain is Venom peptide MmKTx1 (123 aa).

The signal sequence occupies residues 1-21 (MSIKISAIALFMLSFTVFVNG).

It belongs to the scorpion La1-like peptide family. Contains 4 disulfide bonds. Expressed by the venom gland.

The protein localises to the secreted. The protein is Venom peptide MmKTx1 of Olivierus martensii (Manchurian scorpion).